The sequence spans 54 residues: Ovomucoid (54 aa).

The 51-residue stretch at 4-54 folds into the Kazal-like domain; that stretch reads VDCSDYPKPVCTLEDMPLCGSDNITYHNKCYFCNAVAHSNGTLTFSHFGKC. 3 disulfide bridges follow: Cys-6–Cys-36, Cys-14–Cys-33, and Cys-22–Cys-54. Asn-43 carries N-linked (GlcNAc...) asparagine glycosylation.

The protein localises to the secreted. This Carpococcyx renauldi (Coral-billed ground-cuckoo) protein is Ovomucoid.